The chain runs to 446 residues: Probable glycine dehydrogenase (decarboxylating) subunit 1 (446 aa).

It belongs to the GcvP family. N-terminal subunit subfamily. In terms of assembly, the glycine cleavage system is composed of four proteins: P, T, L and H. In this organism, the P 'protein' is a heterodimer of two subunits.

It catalyses the reaction N(6)-[(R)-lipoyl]-L-lysyl-[glycine-cleavage complex H protein] + glycine + H(+) = N(6)-[(R)-S(8)-aminomethyldihydrolipoyl]-L-lysyl-[glycine-cleavage complex H protein] + CO2. The glycine cleavage system catalyzes the degradation of glycine. The P protein binds the alpha-amino group of glycine through its pyridoxal phosphate cofactor; CO(2) is released and the remaining methylamine moiety is then transferred to the lipoamide cofactor of the H protein. In Xanthobacter autotrophicus (strain ATCC BAA-1158 / Py2), this protein is Probable glycine dehydrogenase (decarboxylating) subunit 1.